The sequence spans 232 residues: Phosphatidylserine decarboxylase proenzyme (232 aa).

Serine 190 serves as the catalytic Schiff-base intermediate with substrate; via pyruvic acid. At serine 190 the chain carries Pyruvic acid (Ser); by autocatalysis.

The protein belongs to the phosphatidylserine decarboxylase family. PSD-A subfamily. In terms of assembly, heterodimer of a large membrane-associated beta subunit and a small pyruvoyl-containing alpha subunit. Pyruvate serves as cofactor. Post-translationally, is synthesized initially as an inactive proenzyme. Formation of the active enzyme involves a self-maturation process in which the active site pyruvoyl group is generated from an internal serine residue via an autocatalytic post-translational modification. Two non-identical subunits are generated from the proenzyme in this reaction, and the pyruvate is formed at the N-terminus of the alpha chain, which is derived from the carboxyl end of the proenzyme. The post-translation cleavage follows an unusual pathway, termed non-hydrolytic serinolysis, in which the side chain hydroxyl group of the serine supplies its oxygen atom to form the C-terminus of the beta chain, while the remainder of the serine residue undergoes an oxidative deamination to produce ammonia and the pyruvoyl prosthetic group on the alpha chain.

It localises to the cell membrane. The enzyme catalyses a 1,2-diacyl-sn-glycero-3-phospho-L-serine + H(+) = a 1,2-diacyl-sn-glycero-3-phosphoethanolamine + CO2. Its pathway is phospholipid metabolism; phosphatidylethanolamine biosynthesis; phosphatidylethanolamine from CDP-diacylglycerol: step 2/2. Its function is as follows. Catalyzes the formation of phosphatidylethanolamine (PtdEtn) from phosphatidylserine (PtdSer). The protein is Phosphatidylserine decarboxylase proenzyme of Mesorhizobium japonicum (strain LMG 29417 / CECT 9101 / MAFF 303099) (Mesorhizobium loti (strain MAFF 303099)).